A 282-amino-acid chain; its full sequence is Small ribosomal subunit protein uS2 (282 aa).

The interval 260–282 (KRRRSKVYKEEEREVVTNEDESR) is disordered. Over residues 266–282 (VYKEEEREVVTNEDESR) the composition is skewed to basic and acidic residues.

The protein belongs to the universal ribosomal protein uS2 family.

This is Small ribosomal subunit protein uS2 from Wolbachia sp. subsp. Drosophila simulans (strain wRi).